The following is a 210-amino-acid chain: Ribosomal RNA large subunit methyltransferase E (210 aa).

G67, W69, D87, D103, and D128 together coordinate S-adenosyl-L-methionine. The Proton acceptor role is filled by K168.

The protein belongs to the class I-like SAM-binding methyltransferase superfamily. RNA methyltransferase RlmE family.

Its subcellular location is the cytoplasm. The enzyme catalyses uridine(2552) in 23S rRNA + S-adenosyl-L-methionine = 2'-O-methyluridine(2552) in 23S rRNA + S-adenosyl-L-homocysteine + H(+). Functionally, specifically methylates the uridine in position 2552 of 23S rRNA at the 2'-O position of the ribose in the fully assembled 50S ribosomal subunit. The protein is Ribosomal RNA large subunit methyltransferase E of Psychrobacter sp. (strain PRwf-1).